A 149-amino-acid chain; its full sequence is UPF0179 protein rrnAC1064 (149 aa).

It belongs to the UPF0179 family.

This Haloarcula marismortui (strain ATCC 43049 / DSM 3752 / JCM 8966 / VKM B-1809) (Halobacterium marismortui) protein is UPF0179 protein rrnAC1064.